A 313-amino-acid polypeptide reads, in one-letter code: Ketimine reductase mu-crystallin (313 aa).

R47 lines the 3,3',5-triiodo-L-thyronine pocket. The NADPH site is built by S90, H91, R118, A143, V145, Q146, N167, R168, T169, N172, T204, M205, and V225. E256 lines the 3,3',5-triiodo-L-thyronine pocket. S291 is a binding site for NADPH.

Belongs to the ornithine cyclodeaminase/mu-crystallin family. Homodimer. Binds the thyroid hormone triiodothyronine (T3); T3 binding inhibits enzymatic activity.

It is found in the cytoplasm. The enzyme catalyses L-pipecolate + NADP(+) = Delta(1)-piperideine-2-carboxylate + NADPH + H(+). The catalysed reaction is L-pipecolate + NAD(+) = Delta(1)-piperideine-2-carboxylate + NADH + H(+). It carries out the reaction L-proline + NADP(+) = 1-pyrroline-2-carboxylate + NADPH + H(+). It catalyses the reaction L-proline + NAD(+) = 1-pyrroline-2-carboxylate + NADH + H(+). The enzyme catalyses (3R)-1,4-thiomorpholine-3-carboxylate + NAD(+) = 3,4-dehydrothiomorpholine-3-carboxylate + NADH + 2 H(+). The catalysed reaction is (3R)-1,4-thiomorpholine-3-carboxylate + NADP(+) = 3,4-dehydrothiomorpholine-3-carboxylate + NADPH + 2 H(+). It carries out the reaction (S)-cystathionine ketimine + NADH + 2 H(+) = (3R,5S)-2,3,5,6,7-pentahydro-1,4-thiazepine-3,5-dicarboxylate + NAD(+). It catalyses the reaction (S)-cystathionine ketimine + NADPH + 2 H(+) = (3R,5S)-2,3,5,6,7-pentahydro-1,4-thiazepine-3,5-dicarboxylate + NADP(+). The enzyme catalyses (R)-lanthionine ketimine + NADPH + 2 H(+) = (3R,5R)-1,4-thiomorpholine-3,5-dicarboxylate + NADP(+). The catalysed reaction is Delta(2)-thiazoline-2-carboxylate + NADPH + 2 H(+) = L-thiazolidine-2-carboxylate + NADP(+). Catalyzes the NAD(P)H-dependent reduction of imine double bonds of a number of cyclic ketimine substrates, including sulfur-containing cyclic ketimines. Under physiological conditions, it efficiently catalyzes delta(1)-piperideine-2-carboxylate (P2C) and delta(1)-pyrroline-2-carboxylate (Pyr2C) reduction, suggesting a central role in lysine and glutamate metabolism. Additional substrates are delta(2)-thiazoline-2-carboxylate (T2C), 3,4-dehydrothiomorpholine-3-carboxylate (AECK), and (R)-lanthionine ketimine (LK) that is reduced at very low rate compared to other substrates. Also catalyzes the NAD(P)H-dependent reduction of (S)-cystathionine ketimine (CysK). The protein is Ketimine reductase mu-crystallin of Rattus norvegicus (Rat).